Reading from the N-terminus, the 352-residue chain is Quinolinate synthase (352 aa).

The iminosuccinate site is built by histidine 48 and serine 69. Cysteine 114 is a [4Fe-4S] cluster binding site. Iminosuccinate is bound by residues 140–142 and serine 157; that span reads YAN. Cysteine 201 contacts [4Fe-4S] cluster. Residues 227 to 229 and threonine 244 contribute to the iminosuccinate site; that span reads HPE. Cysteine 298 is a binding site for [4Fe-4S] cluster.

This sequence belongs to the quinolinate synthase family. Type 1 subfamily. [4Fe-4S] cluster serves as cofactor.

The protein localises to the cytoplasm. It carries out the reaction iminosuccinate + dihydroxyacetone phosphate = quinolinate + phosphate + 2 H2O + H(+). It participates in cofactor biosynthesis; NAD(+) biosynthesis; quinolinate from iminoaspartate: step 1/1. Functionally, catalyzes the condensation of iminoaspartate with dihydroxyacetone phosphate to form quinolinate. The sequence is that of Quinolinate synthase from Pseudomonas putida (strain ATCC 700007 / DSM 6899 / JCM 31910 / BCRC 17059 / LMG 24140 / F1).